We begin with the raw amino-acid sequence, 157 residues long: 2-C-methyl-D-erythritol 2,4-cyclodiphosphate synthase (157 aa).

D8, H10, and H42 together coordinate a divalent metal cation. 8 to 10 (DVH) contacts 4-CDP-2-C-methyl-D-erythritol 2-phosphate. 4-CDP-2-C-methyl-D-erythritol 2-phosphate contacts are provided by residues 56–58 (DIG), 132–135 (STSE), F139, and R142.

This sequence belongs to the IspF family. In terms of assembly, homotrimer. It depends on a divalent metal cation as a cofactor.

The enzyme catalyses 4-CDP-2-C-methyl-D-erythritol 2-phosphate = 2-C-methyl-D-erythritol 2,4-cyclic diphosphate + CMP. Its pathway is isoprenoid biosynthesis; isopentenyl diphosphate biosynthesis via DXP pathway; isopentenyl diphosphate from 1-deoxy-D-xylulose 5-phosphate: step 4/6. In terms of biological role, involved in the biosynthesis of isopentenyl diphosphate (IPP) and dimethylallyl diphosphate (DMAPP), two major building blocks of isoprenoid compounds. Catalyzes the conversion of 4-diphosphocytidyl-2-C-methyl-D-erythritol 2-phosphate (CDP-ME2P) to 2-C-methyl-D-erythritol 2,4-cyclodiphosphate (ME-CPP) with a corresponding release of cytidine 5-monophosphate (CMP). This is 2-C-methyl-D-erythritol 2,4-cyclodiphosphate synthase from Dehalococcoides mccartyi (strain CBDB1).